Here is a 3184-residue protein sequence, read N- to C-terminus: WD repeat- and FYVE domain-containing protein 4 (3184 aa).

Positions 1–18 are enriched in basic and acidic residues; it reads MEAEDLSKAEDRNEDPGS. Disordered stretches follow at residues 1-39, 944-993, 1837-1869, and 2309-2335; these read MEAE…QSSS, SHTH…QDST, VGAE…KAHP, and ALSS…NQDE. The span at 981–993 shows a compositional bias: polar residues; that stretch reads QAPQPLGESQDST. Residues 2314–2324 show a composition bias toward basic and acidic residues; it reads RHKESQDKNDH. Positions 2385–2510 constitute a BEACH-type PH domain; sequence LDKEKVTQKF…DRSKAFKSFC (126 aa). A BEACH domain is found at 2527–2821; the sequence is SLRRYPGSDR…QLFTKPHPAR (295 aa). 6 WD repeats span residues 2863–2922, 2923–2972, 2973–3014, 3015–3057, 3058–3141, and 3142–3184; these read MYLF…YGSD, KVLM…PRGL, RLRQ…LDHL, THVT…GQPL, ASIT…ELDV, and SIAL…SADG. The interval 3107 to 3128 is disordered; it reads SVPGRPAGEEPPAQPPSPRGHK.

In terms of assembly, interacts with HSP90AB1.

The protein resides in the early endosome. Its subcellular location is the endoplasmic reticulum. Its function is as follows. Plays a critical role in the regulation of cDC1-mediated cross-presentation of viral and tumor antigens in dendritic cells. Mechanistically, acts near the plasma membrane and interacts with endosomal membranes to promote endosomal-to-cytosol antigen trafficking. Also plays a role in B-cell survival through regulation of autophagy. This Homo sapiens (Human) protein is WD repeat- and FYVE domain-containing protein 4 (WDFY4).